Here is a 199-residue protein sequence, read N- to C-terminus: Recombination protein RecR (199 aa).

The C4-type zinc finger occupies C57–C72. In terms of domain architecture, Toprim spans T80–S176.

It belongs to the RecR family.

In terms of biological role, may play a role in DNA repair. It seems to be involved in an RecBC-independent recombinational process of DNA repair. It may act with RecF and RecO. The protein is Recombination protein RecR of Levilactobacillus brevis (strain ATCC 367 / BCRC 12310 / CIP 105137 / JCM 1170 / LMG 11437 / NCIMB 947 / NCTC 947) (Lactobacillus brevis).